A 376-amino-acid chain; its full sequence is MTQRFSFELTATDGRARTGVISTPRGEIRTPAFMPVGTAGTVKAMLPENVRATGADILLGNTYHLMLRPTAERVARLGGLHRFMNWDRPILTDSGGFQVMSLADLRKLSEEGVTFRSHIDGSKHHLSPERSMEIQRLLGSDIVMAFDECPALPATEEAVAQSMRLSMRWARRSREAFGDRPGHALFGIMQGGVTRDLREESAAALREIGFEGYAIGGLAVGEGQEAMFGVLDYAPGFLPEDRPRYLMGVGKPDDIVGAVERGVDMMDCVLPSRSGRTGQAWTRRGQVNIKNARHMDDPRPLDEACSCPACRSYSRAYLHHVFRAQEIIASMLLTWHNLHYYQELMQGLRTAIAAGRLGEFVAAFHAARAEGDIEPL.

D93 serves as the catalytic Proton acceptor. Residues 93-97 (DSGGF), D147, Q190, and G217 contribute to the substrate site. The interval 248 to 254 (GVGKPDD) is RNA binding. The active-site Nucleophile is the D267. C305, C307, C310, and H336 together coordinate Zn(2+).

It belongs to the queuine tRNA-ribosyltransferase family. In terms of assembly, homodimer. Within each dimer, one monomer is responsible for RNA recognition and catalysis, while the other monomer binds to the replacement base PreQ1. Zn(2+) is required as a cofactor.

It catalyses the reaction 7-aminomethyl-7-carbaguanine + guanosine(34) in tRNA = 7-aminomethyl-7-carbaguanosine(34) in tRNA + guanine. Its pathway is tRNA modification; tRNA-queuosine biosynthesis. In terms of biological role, catalyzes the base-exchange of a guanine (G) residue with the queuine precursor 7-aminomethyl-7-deazaguanine (PreQ1) at position 34 (anticodon wobble position) in tRNAs with GU(N) anticodons (tRNA-Asp, -Asn, -His and -Tyr). Catalysis occurs through a double-displacement mechanism. The nucleophile active site attacks the C1' of nucleotide 34 to detach the guanine base from the RNA, forming a covalent enzyme-RNA intermediate. The proton acceptor active site deprotonates the incoming PreQ1, allowing a nucleophilic attack on the C1' of the ribose to form the product. After dissociation, two additional enzymatic reactions on the tRNA convert PreQ1 to queuine (Q), resulting in the hypermodified nucleoside queuosine (7-(((4,5-cis-dihydroxy-2-cyclopenten-1-yl)amino)methyl)-7-deazaguanosine). The chain is Queuine tRNA-ribosyltransferase from Cereibacter sphaeroides (strain ATCC 17029 / ATH 2.4.9) (Rhodobacter sphaeroides).